Reading from the N-terminus, the 275-residue chain is Undecaprenyl-diphosphatase (275 aa).

Helical transmembrane passes span 1 to 21 (MTTF…FLPV), 41 to 61 (ILFL…FVYA), 95 to 115 (LLII…KDLF), 118 to 138 (FYNS…LLWT), 192 to 212 (ATKF…VFEV), 223 to 243 (FTLT…VFAI), and 255 to 275 (LYYF…FSLL).

It belongs to the UppP family.

It localises to the cell membrane. The catalysed reaction is di-trans,octa-cis-undecaprenyl diphosphate + H2O = di-trans,octa-cis-undecaprenyl phosphate + phosphate + H(+). Functionally, catalyzes the dephosphorylation of undecaprenyl diphosphate (UPP). Confers resistance to bacitracin. This is Undecaprenyl-diphosphatase from Alkaliphilus metalliredigens (strain QYMF).